The following is a 532-amino-acid chain: BEL1-like homeodomain protein 6 (532 aa).

An SR/KY domain region spans residues 144-160 (SKYLKAAQQLLDEAVNV). Positions 170–203 (EGDKNNENPQEPNQSTQDSSTNPPADISQSERQE) are disordered. Over residues 176-197 (ENPQEPNQSTQDSSTNPPADIS) the composition is skewed to polar residues. Positions 200–271 (ERQEMQSKLT…SLRDAISGQI (72 aa)) are BELL domain. The segment at residues 314-376 (AWRPQRGLPE…NARVRLWKPM (63 aa)) is a DNA-binding region (homeobox). The disordered stretch occupies residues 385 to 434 (FTENDSNSSSENTPKMSEIGPVAADDEDRAREFSQDQTKPDHGHGYGEET). The segment covering 412 to 434 (DRAREFSQDQTKPDHGHGYGEET) has biased composition (basic and acidic residues).

It belongs to the TALE/BELL homeobox family. May form heterodimeric complexes with TALE/KNOX proteins. Interacts with OFP2, OFP4, and OFP5.

The protein localises to the nucleus. In Arabidopsis thaliana (Mouse-ear cress), this protein is BEL1-like homeodomain protein 6 (BLH6).